Here is a 410-residue protein sequence, read N- to C-terminus: Kynureninase (410 aa).

Pyridoxal 5'-phosphate-binding positions include T108, S109, F135–D138, T176, D205, H208, and Y230. K231 is modified (N6-(pyridoxal phosphate)lysine). W260 and T286 together coordinate pyridoxal 5'-phosphate.

This sequence belongs to the kynureninase family. As to quaternary structure, homodimer. The cofactor is pyridoxal 5'-phosphate.

It catalyses the reaction L-kynurenine + H2O = anthranilate + L-alanine + H(+). The catalysed reaction is 3-hydroxy-L-kynurenine + H2O = 3-hydroxyanthranilate + L-alanine + H(+). It functions in the pathway amino-acid degradation; L-kynurenine degradation; L-alanine and anthranilate from L-kynurenine: step 1/1. Its pathway is cofactor biosynthesis; NAD(+) biosynthesis; quinolinate from L-kynurenine: step 2/3. Catalyzes the cleavage of L-kynurenine (L-Kyn) and L-3-hydroxykynurenine (L-3OHKyn) into anthranilic acid (AA) and 3-hydroxyanthranilic acid (3-OHAA), respectively. This is Kynureninase from Deinococcus radiodurans (strain ATCC 13939 / DSM 20539 / JCM 16871 / CCUG 27074 / LMG 4051 / NBRC 15346 / NCIMB 9279 / VKM B-1422 / R1).